Here is a 227-residue protein sequence, read N- to C-terminus: Cytidylate kinase (227 aa).

An ATP-binding site is contributed by 12-20 (GPSGAGKGT).

Belongs to the cytidylate kinase family. Type 1 subfamily.

Its subcellular location is the cytoplasm. It catalyses the reaction CMP + ATP = CDP + ADP. The catalysed reaction is dCMP + ATP = dCDP + ADP. The chain is Cytidylate kinase from Xanthomonas axonopodis pv. citri (strain 306).